The chain runs to 37 residues: Large ribosomal subunit protein bL36 (37 aa).

This sequence belongs to the bacterial ribosomal protein bL36 family.

This Shewanella baltica (strain OS223) protein is Large ribosomal subunit protein bL36.